Consider the following 264-residue polypeptide: Merozoite surface protein 2 (264 aa).

A signal peptide spans 1–20 (MKVIKTLSIINFFIFVTFNI). 2 N-linked (GlcNAc...) asparagine glycosylation sites follow: Asn22 and Asn36. The polymorphic region stretch occupies residues 44–190 (ANEGSNTNSV…PQTAENENPA (147 aa)). Residues 46–227 (EGSNTNSVGA…QKECTDGNKE (182 aa)) are disordered. 2 tandem repeats follow at residues 60–91 (ADTI…TPTA) and 92–123 (ADTI…TPTA). The segment at 60 to 123 (ADTIASGSQR…GESQTTTPTA (64 aa)) is 2 X 32 AA perfects repeats. A compositionally biased stretch (low complexity) spans 70-81 (STNSASTSTTNN). A compositionally biased stretch (polar residues) spans 82 to 101 (GESQTTTPTAADTIASGSQR). Residues 102–145 (STNSASTSTTNNGESQTTTPTAADTPTATESISPSPPITTTESS) are compositionally biased toward low complexity. The segment covering 154–166 (TDGKGEESEKQNE) has biased composition (basic and acidic residues). N-linked (GlcNAc...) asparagine glycosylation occurs at Asn213. A compositionally biased stretch (basic and acidic residues) spans 217-226 (SQKECTDGNK). A disulfide bridge links Cys221 with Cys229. Residue Asn238 is glycosylated (N-linked (GlcNAc...) asparagine). A lipid anchor (GPI-anchor amidated asparagine) is attached at Asn238. Positions 239 to 264 (SSNIASINKFVVLISATLVLSFAIFI) are cleaved as a propeptide — removed in mature form.

The protein localises to the cell membrane. Its function is as follows. May play a role in the merozoite attachment to the erythrocyte. This is Merozoite surface protein 2 from Plasmodium falciparum (isolate FC27 / Papua New Guinea).